The chain runs to 96 residues: UPF0125 protein YfjF (96 aa).

The protein belongs to the UPF0125 (RnfH) family.

The sequence is that of UPF0125 protein YfjF (yfjF) from Escherichia coli O157:H7.